A 429-amino-acid chain; its full sequence is Zinc finger protein 275 (429 aa).

Residues 31 to 95 (VSDPSPNTDP…DGKRGSPQNL (65 aa)) form a disordered region. Positions 34 to 51 (PSPNTDPAKYSESTSATR) are enriched in polar residues. Ser-76 bears the Phosphoserine mark. Residues 79-89 (FRQHGDSDGKR) are compositionally biased toward basic and acidic residues. C2H2-type zinc fingers lie at residues 101-123 (FACK…QRVH) and 129-151 (WECG…RKSH). The tract at residues 149–176 (KSHVAAEPQPGPSRALENAAEKREQMER) is disordered. The segment covering 167–176 (AAEKREQMER) has biased composition (basic and acidic residues). C2H2-type zinc fingers lie at residues 181 to 203 (FECE…LRVH), 209 to 231 (FDCE…QKLH), 237 to 259 (FACK…QRMH), 265 to 287 (FDCD…QRIH), 293 to 315 (YGCP…RRIH), 321 to 343 (YACG…ARIH), 349 to 371 (YACG…RRIH), 377 to 399 (YECD…RRIH), and 405 to 427 (CECS…QPTH).

This sequence belongs to the krueppel C2H2-type zinc-finger protein family.

The protein localises to the nucleus. May be involved in transcriptional regulation. The protein is Zinc finger protein 275 (ZNF275) of Homo sapiens (Human).